Consider the following 193-residue polypeptide: Large ribosomal subunit protein uL11 (193 aa).

Belongs to the universal ribosomal protein uL11 family. As to quaternary structure, part of the ribosomal stalk of the 50S ribosomal subunit. Interacts with L10 and the large rRNA to form the base of the stalk. L10 forms an elongated spine to which L12 dimers bind in a sequential fashion forming a multimeric L10(L12)X complex. Post-translationally, one or more lysine residues are methylated.

Its function is as follows. Forms part of the ribosomal stalk which helps the ribosome interact with GTP-bound translation factors. This is Large ribosomal subunit protein uL11 from Mycoplasmopsis synoviae (strain 53) (Mycoplasma synoviae).